We begin with the raw amino-acid sequence, 608 residues long: Alpha-glycerophosphate oxidase (608 aa).

21-49 (DLLIIGGGITGAGVALQAAASGLETGLIE) lines the FAD pocket. Positions 393 to 418 (SAVSKLESSTSEKHLDPSAVSRGSSL) are disordered.

It belongs to the FAD-dependent glycerol-3-phosphate dehydrogenase family. FAD serves as cofactor.

It is found in the cell membrane. The enzyme catalyses sn-glycerol 3-phosphate + O2 = dihydroxyacetone phosphate + H2O2. It participates in membrane lipid metabolism; glycerophospholipid metabolism. The chain is Alpha-glycerophosphate oxidase (glpO) from Streptococcus pneumoniae serotype 4 (strain ATCC BAA-334 / TIGR4).